Consider the following 218-residue polypeptide: Adenylate kinase (218 aa).

10-15 (GAGKGT) contacts ATP. The tract at residues 30–59 (STGDMLRAAVKAATPLGLAAKKIMDEGGLV) is NMP. AMP-binding positions include Thr-31, Arg-36, 57-59 (GLV), 85-88 (GFPR), and Gln-92. Residues 122–159 (GRRVHLASGRTYHVTFNPPAVPDKDDLTGEPLVQRNDD) form an LID region. Residues Arg-123 and 132–133 (TY) contribute to the ATP site. Residues Arg-156 and Arg-167 each coordinate AMP. Gly-203 is a binding site for ATP.

This sequence belongs to the adenylate kinase family. As to quaternary structure, monomer.

Its subcellular location is the cytoplasm. It carries out the reaction AMP + ATP = 2 ADP. It participates in purine metabolism; AMP biosynthesis via salvage pathway; AMP from ADP: step 1/1. Catalyzes the reversible transfer of the terminal phosphate group between ATP and AMP. Plays an important role in cellular energy homeostasis and in adenine nucleotide metabolism. The chain is Adenylate kinase from Chlorobaculum tepidum (strain ATCC 49652 / DSM 12025 / NBRC 103806 / TLS) (Chlorobium tepidum).